The chain runs to 318 residues: Glutathione synthetase (318 aa).

The 187-residue stretch at 125 to 311 folds into the ATP-grasp domain; that stretch reads EKLFTAWFPE…ITGKLMDAIE (187 aa). 151–208 is an ATP binding site; the sequence is FRQEHGDIILKPLDGMGGASIFRVKENDPNVSVIIETLTNHGQNYAMAQTFVPDISNG. 2 residues coordinate Mg(2+): glutamate 282 and asparagine 284.

This sequence belongs to the prokaryotic GSH synthase family. Requires Mg(2+) as cofactor. It depends on Mn(2+) as a cofactor.

The catalysed reaction is gamma-L-glutamyl-L-cysteine + glycine + ATP = glutathione + ADP + phosphate + H(+). It participates in sulfur metabolism; glutathione biosynthesis; glutathione from L-cysteine and L-glutamate: step 2/2. This chain is Glutathione synthetase, found in Vibrio vulnificus (strain YJ016).